Here is a 626-residue protein sequence, read N- to C-terminus: Pheromone B alpha 3 receptor (626 aa).

Helical transmembrane passes span 8–28 (LFPTFAFLGFVLALVPLPWHL), 36–56 (CFFMVWTALGCLNQFVNSIVW), 70–90 (ISIRITMGLSVGLPASSLCII), 113–133 (IIIDALICVLFPLVYIAMQYI), 163–183 (IWPVLIGMVSATYSVLALIEF), 208–228 (LMALAMTEMCCTVPLGIFVIV), and 271–291 (ELTRWLAPVSAMLFFAYFGFA). 4 disordered regions span residues 363–409 (KQYT…SSPI), 481–509 (ATFTSANNDTDEPTSPALPDTPSSCSSSA), 524–549 (STTDVTRDTGSLPIRRSPAGPPRLPS), and 571–626 (QDVA…RASV). A compositionally biased stretch (low complexity) spans 376-391 (SSSGFSSSESTRFGSS). Positions 574–606 (ATGTAAPTTTAPAPASTTIAPATTTATAPTTTA) are enriched in low complexity.

It belongs to the G-protein coupled receptor 4 family.

The protein localises to the membrane. Its function is as follows. Receptor for the BAP3 pheromone, a prenylated mating factor. The sequence is that of Pheromone B alpha 3 receptor (BAR3) from Schizophyllum commune (strain H4-8 / FGSC 9210) (Split gill fungus).